The primary structure comprises 695 residues: Methionine synthase reductase (695 aa).

Residues 4-147 form the Flavodoxin-like domain; sequence FLLLYATQRG…VVEPWINGLW (144 aa). Residues 10–14 and 93–124 each bind FMN; these read TQRGQ and LLGL…QRFY. The interval 166–245 is hinge; sequence TLTMASHASR…ASLNIPSLPP (80 aa). Residues Ser-171 and Ser-187 each carry the phosphoserine modification. One can recognise an FAD-binding FR-type domain in the interval 269-531; it reads DPVFHVPVSK…PRTTNSFHLP (263 aa). Residue Lys-289 participates in NADP(+) binding. FAD-binding positions include 449-452 and 485-488; these read RPYS and GVCT. Residues 608 to 609, 622 to 624, and Asp-657 contribute to the NADP(+) site; these read SR and YVQ. An FAD-binding site is contributed by Trp-695.

In terms of assembly, forms a multiprotein complex with MMACHC, MMADHC and MTR. FAD serves as cofactor. FMN is required as a cofactor.

The protein localises to the cytoplasm. The enzyme catalyses 2 methylcob(III)alamin-[methionine synthase] + 2 S-adenosyl-L-homocysteine + NADP(+) + H(+) = 2 cob(II)alamin-[methionine synthase] + 2 S-adenosyl-L-methionine + NADPH. The catalysed reaction is 2 cob(II)alamin + A + 2 H2O + 2 H(+) = 2 aquacob(III)alamin + AH2. Functionally, key enzyme in methionine and folate homeostasis responsible for the reactivation of methionine synthase (MTR/MS) activity by catalyzing the reductive methylation of MTR-bound cob(II)alamin. Cobalamin (vitamin B12) forms a complex with MTR to serve as an intermediary in methyl transfer reactions that cycles between MTR-bound methylcob(III)alamin and MTR bound-cob(I)alamin forms, and occasional oxidative escape of the cob(I)alamin intermediate during the catalytic cycle leads to the inactive cob(II)alamin species. The processing of cobalamin in the cytosol occurs in a multiprotein complex composed of at least MMACHC, MMADHC, MTRR and MTR which may contribute to shuttle safely and efficiently cobalamin towards MTR in order to produce methionine. Also necessary for the utilization of methyl groups from the folate cycle, thereby affecting transgenerational epigenetic inheritance. Also acts as a molecular chaperone for methionine synthase by stabilizing apoMTR and incorporating methylcob(III)alamin into apoMTR to form the holoenzyme. Also serves as an aquacob(III)alamin reductase by reducing aquacob(III)alamin to cob(II)alamin; this reduction leads to stimulation of the conversion of apoMTR and aquacob(III)alamin to MTR holoenzyme. In Bos taurus (Bovine), this protein is Methionine synthase reductase (MTRR).